Here is a 660-residue protein sequence, read N- to C-terminus: Bifunctional polymyxin resistance protein ArnA (660 aa).

The formyltransferase ArnAFT stretch occupies residues 1–304 (MKAVVFAYHN…EMYLVEGMRF (304 aa)). His104 acts as the Proton donor; for formyltransferase activity in catalysis. Residues Arg114 and 136–140 (TVKPD) each bind (6R)-10-formyltetrahydrofolate. Positions 316 to 660 (RRQKVLIMGA…FLKTAVEETK (345 aa)) are dehydrogenase ArnADH. Residues Asp349 and 370–371 (DI) each bind NAD(+). UDP-alpha-D-glucuronate-binding positions include Ala395, Tyr400, and 434 to 435 (TS). The active-site Proton acceptor; for decarboxylase activity is Glu436. Residues Arg462, Asn494, 528-537 (KLIDGGEQKR), and Tyr615 contribute to the UDP-alpha-D-glucuronate site. The active-site Proton donor; for decarboxylase activity is Arg621.

The protein in the N-terminal section; belongs to the Fmt family. UDP-L-Ara4N formyltransferase subfamily. It in the C-terminal section; belongs to the NAD(P)-dependent epimerase/dehydratase family. UDP-glucuronic acid decarboxylase subfamily. Homohexamer, formed by a dimer of trimers.

The enzyme catalyses UDP-alpha-D-glucuronate + NAD(+) = UDP-beta-L-threo-pentopyranos-4-ulose + CO2 + NADH. The catalysed reaction is UDP-4-amino-4-deoxy-beta-L-arabinose + (6R)-10-formyltetrahydrofolate = UDP-4-deoxy-4-formamido-beta-L-arabinose + (6S)-5,6,7,8-tetrahydrofolate + H(+). The protein operates within nucleotide-sugar biosynthesis; UDP-4-deoxy-4-formamido-beta-L-arabinose biosynthesis; UDP-4-deoxy-4-formamido-beta-L-arabinose from UDP-alpha-D-glucuronate: step 1/3. It participates in nucleotide-sugar biosynthesis; UDP-4-deoxy-4-formamido-beta-L-arabinose biosynthesis; UDP-4-deoxy-4-formamido-beta-L-arabinose from UDP-alpha-D-glucuronate: step 3/3. It functions in the pathway bacterial outer membrane biogenesis; lipopolysaccharide biosynthesis. Bifunctional enzyme that catalyzes the oxidative decarboxylation of UDP-glucuronic acid (UDP-GlcUA) to UDP-4-keto-arabinose (UDP-Ara4O) and the addition of a formyl group to UDP-4-amino-4-deoxy-L-arabinose (UDP-L-Ara4N) to form UDP-L-4-formamido-arabinose (UDP-L-Ara4FN). The modified arabinose is attached to lipid A and is required for resistance to polymyxin and cationic antimicrobial peptides. The polypeptide is Bifunctional polymyxin resistance protein ArnA (Shewanella sediminis (strain HAW-EB3)).